We begin with the raw amino-acid sequence, 685 residues long: tRNA-dihydrouridine(47) synthase [NAD(P)(+)]-like (685 aa).

Residues 1–12 (MAATAAAAAAAP) are compositionally biased toward low complexity. Disordered regions lie at residues 1–91 (MAAT…SSSH), 209–234 (AAND…PLCN), and 257–314 (LIDN…SCRT). Over residues 13 to 29 (PADPPDSSPAASSPPRP) the composition is skewed to pro residues. The C3H1-type zinc-finger motif lies at 87-118 (KSSSHLCIEVGKSGNVSSCKYGDSCRFSHDID). Composition is skewed to basic and acidic residues over residues 209 to 221 (AAND…HDNL) and 273 to 284 (SKVESDEIDKHG). The segment covering 287 to 314 (TLNTNTESEDPNLSNGLEPSNNSSSCRT) has biased composition (polar residues). FMN-binding positions include 338–340 (PLT) and Q392. The active-site Proton donor is the C423. FMN contacts are provided by residues K462, H492, 525–527 (NGD), and 550–551 (AR).

The protein belongs to the Dus family. Dus3 subfamily. FMN is required as a cofactor.

The enzyme catalyses 5,6-dihydrouridine(47) in tRNA + NAD(+) = uridine(47) in tRNA + NADH + H(+). The catalysed reaction is 5,6-dihydrouridine(47) in tRNA + NADP(+) = uridine(47) in tRNA + NADPH + H(+). It catalyses the reaction a 5,6-dihydrouridine in mRNA + NAD(+) = a uridine in mRNA + NADH + H(+). It carries out the reaction a 5,6-dihydrouridine in mRNA + NADP(+) = a uridine in mRNA + NADPH + H(+). In terms of biological role, catalyzes the synthesis of dihydrouridine, a modified base found in the D-loop of most tRNAs. Specifically modifies U47 in cytoplasmic tRNAs. Catalyzes the synthesis of dihydrouridine in some mRNAs, thereby affecting their translation. The protein is tRNA-dihydrouridine(47) synthase [NAD(P)(+)]-like of Oryza sativa subsp. japonica (Rice).